We begin with the raw amino-acid sequence, 851 residues long: UPF0508 protein CAGL0M08074g (851 aa).

The protein belongs to the UPF0508 family.

The chain is UPF0508 protein CAGL0M08074g from Candida glabrata (strain ATCC 2001 / BCRC 20586 / JCM 3761 / NBRC 0622 / NRRL Y-65 / CBS 138) (Yeast).